Consider the following 425-residue polypeptide: Serine--tRNA ligase (425 aa).

L-serine is bound at residue 231-233; sequence TAE. 262–264 is a binding site for ATP; it reads RSE. Glu-285 contacts L-serine. An ATP-binding site is contributed by 349-352; the sequence is EISS. Ser-385 serves as a coordination point for L-serine.

This sequence belongs to the class-II aminoacyl-tRNA synthetase family. Type-1 seryl-tRNA synthetase subfamily. Homodimer. The tRNA molecule binds across the dimer.

It is found in the cytoplasm. The catalysed reaction is tRNA(Ser) + L-serine + ATP = L-seryl-tRNA(Ser) + AMP + diphosphate + H(+). The enzyme catalyses tRNA(Sec) + L-serine + ATP = L-seryl-tRNA(Sec) + AMP + diphosphate + H(+). It participates in aminoacyl-tRNA biosynthesis; selenocysteinyl-tRNA(Sec) biosynthesis; L-seryl-tRNA(Sec) from L-serine and tRNA(Sec): step 1/1. Functionally, catalyzes the attachment of serine to tRNA(Ser). Is also able to aminoacylate tRNA(Sec) with serine, to form the misacylated tRNA L-seryl-tRNA(Sec), which will be further converted into selenocysteinyl-tRNA(Sec). In Bartonella bacilliformis (strain ATCC 35685 / KC583 / Herrer 020/F12,63), this protein is Serine--tRNA ligase.